A 375-amino-acid chain; its full sequence is Histidine biosynthesis bifunctional protein HisB (375 aa).

The histidinol-phosphatase stretch occupies residues 1-168 (MTPIVFIDRD…GIAHTLADAP (168 aa)). Catalysis depends on aspartate 8, which acts as the Nucleophile. Positions 8, 10, and 128 each coordinate Mg(2+). The active-site Proton donor is the aspartate 10. Residues 169-375 (RRAVVQRHTK…HVLPSTKGAL (207 aa)) are imidazoleglycerol-phosphate dehydratase.

In the N-terminal section; belongs to the histidinol-phosphatase family. The protein in the C-terminal section; belongs to the imidazoleglycerol-phosphate dehydratase family. It depends on Mg(2+) as a cofactor.

It is found in the cytoplasm. It carries out the reaction D-erythro-1-(imidazol-4-yl)glycerol 3-phosphate = 3-(imidazol-4-yl)-2-oxopropyl phosphate + H2O. The catalysed reaction is L-histidinol phosphate + H2O = L-histidinol + phosphate. The protein operates within amino-acid biosynthesis; L-histidine biosynthesis; L-histidine from 5-phospho-alpha-D-ribose 1-diphosphate: step 6/9. It functions in the pathway amino-acid biosynthesis; L-histidine biosynthesis; L-histidine from 5-phospho-alpha-D-ribose 1-diphosphate: step 8/9. This chain is Histidine biosynthesis bifunctional protein HisB, found in Xylella fastidiosa (strain Temecula1 / ATCC 700964).